A 556-amino-acid chain; its full sequence is Solute carrier family 22 member 1 (556 aa).

Residues Met1 to Ala21 are Cytoplasmic-facing. Residues Phe22–Leu42 form a helical membrane-spanning segment. The Extracellular segment spans residues Gly43–Asp150. N-linked (GlcNAc...) asparagine glycosylation occurs at Asn71. The helical transmembrane segment at Leu151 to Ala171 threads the bilayer. Topologically, residues Asp172–Lys177 are cytoplasmic. Residues Leu178–Pro198 form a helical membrane-spanning segment. Residues Asp199 to Gly211 are Extracellular-facing. Residues Met212–Ser231 traverse the membrane as a helical segment. Over Gly232–Ala238 the chain is Cytoplasmic. A helical membrane pass occupies residues Ile239–Ile259. The Extracellular segment spans residues Pro260–Arg263. A helical transmembrane segment spans residues Trp264–Pro284. The Proline-rich sequence motif lies at Pro284–Arg288. Topologically, residues Glu285–Thr348 are cytoplasmic. Position 334 is a phosphoserine (Ser334). A helical transmembrane segment spans residues Val349–Val369. Residues Gly370–Tyr377 lie on the Extracellular side of the membrane. A helical transmembrane segment spans residues Leu378–Ile398. The Cytoplasmic segment spans residues Asp399–Arg403. Residues Ile404–Ile424 form a helical membrane-spanning segment. Residues Pro425–His429 are Extracellular-facing. The chain crosses the membrane as a helical span at residues Trp430–Leu452. Residues Val453 to Leu465 are Cytoplasmic-facing. Residues Gly466–Phe486 form a helical membrane-spanning segment. The Extracellular segment spans residues Arg487–Gln493. Residues Ala494–Leu514 form a helical membrane-spanning segment. The Cytoplasmic segment spans residues Pro515–Thr556. Thr543 is modified (phosphothreonine).

This sequence belongs to the major facilitator (TC 2.A.1) superfamily. Organic cation transporter (TC 2.A.1.19) family. Post-translationally, phosphorylated. In terms of tissue distribution, expressed in kidney cortex in S1, S2 segments of renal proximal tubules as well as in kidney medulla. Expressed throughout the liver lobuli, in hepatocytes surrounding the central veins. Expressed in enterocytes of villi and crypts in small intestine. Expressed in brain, in some white matter regions like the corpus callosum and in the granular layer of the cerebellum. Expressed in Sertoli cells in testis. Expressed in colon. Expressed in tracheal and bronchial ciliated epithelium in the respiratory tract. Expressed in spleen, moderately in skin, and weakly in the gastrointestinal tract, lung, thymus, muscle, and prostate. As to expression, expressed in kidney cortex and medulla. Expressed in intestine, liver and colon.

Its subcellular location is the basolateral cell membrane. The protein resides in the apical cell membrane. It is found in the lateral cell membrane. The protein localises to the basal cell membrane. It localises to the cell membrane. The enzyme catalyses 1-methylnicotinamide(out) = 1-methylnicotinamide(in). It catalyses the reaction dopamine(out) = dopamine(in). The catalysed reaction is serotonin(out) = serotonin(in). It carries out the reaction (R)-adrenaline(out) = (R)-adrenaline(in). The enzyme catalyses (R)-noradrenaline(out) = (R)-noradrenaline(in). It catalyses the reaction histamine(out) = histamine(in). The catalysed reaction is guanidine(out) = guanidine(in). It carries out the reaction choline(out) = choline(in). The enzyme catalyses acetylcholine(in) = acetylcholine(out). It catalyses the reaction thiamine(in) = thiamine(out). The catalysed reaction is agmatine(out) = agmatine(in). It carries out the reaction putrescine(out) = putrescine(in). The enzyme catalyses spermidine(in) = spermidine(out). It catalyses the reaction (R)-carnitine(in) = (R)-carnitine(out). The catalysed reaction is O-isobutanoyl-(R)-carnitine(in) = O-isobutanoyl-(R)-carnitine(out). It carries out the reaction O-acetyl-(R)-carnitine(in) = O-acetyl-(R)-carnitine(out). The enzyme catalyses O-3-hydroxybutanoyl-(R)-carnitine(in) = O-3-hydroxybutanoyl-(R)-carnitine(out). It catalyses the reaction O-propanoyl-(R)-carnitine(in) = O-propanoyl-(R)-carnitine(out). The catalysed reaction is O-butanoyl-(R)-carnitine(in) = O-butanoyl-(R)-carnitine(out). It carries out the reaction O-2-methylbutanoyl-(R)-carnitine(in) = O-2-methylbutanoyl-(R)-carnitine(out). The enzyme catalyses O-3-methylbutanoyl-(R)-carnitine(in) = O-3-methylbutanoyl-(R)-carnitine(out). It catalyses the reaction O-hexanoyl-(R)-carnitine(in) = O-hexanoyl-(R)-carnitine(out). The catalysed reaction is L-histidyl-L-proline diketopiperazine(in) = L-histidyl-L-proline diketopiperazine(out). It carries out the reaction (R)-salsolinol(in) = (R)-salsolinol(out). The enzyme catalyses prostaglandin F2alpha(out) = prostaglandin F2alpha(in). It catalyses the reaction prostaglandin E2(out) = prostaglandin E2(in). With respect to regulation, phosphorylation of the transporter leads to changes in its substrate affinity, resulting in a regulation of the transport activity. In contrast with human ortholog, ASP uptake is stimulated by protein kinase A (PKA) and C (PKC) and endogenous tyrosine kinase activation. ASP affinity is induced by PKC-dependent phosphorylation. Inhibited by cGMP, most likely through a cGMP-binding protein that interacts with OCT1. In terms of biological role, electrogenic voltage-dependent transporter that mediates the transport of a variety of organic cations such as endogenous bioactive amines, cationic drugs and xenobiotics. Functions as a pH- and Na(+)-independent, bidirectional transporter. Cation cellular uptake or release is driven by the electrochemical potential (i.e. membrane potential and concentration gradient) and substrate selectivity. Hydrophobicity is a major requirement for recognition in polyvalent substrates and inhibitors. Primarily expressed in the basolateral membrane of hepatocytes and proximal tubules and involved in the uptake and disposition of cationic compounds from the blood by hepatic and renal clearance. Most likely functions as an uptake carrier in enterocytes contributing to the intestinal excretion and elimination of organic cations from the systemic circulation. Transports endogenous monoamines such as N-1-methylnicotinamide (NMN), guanidine, neurotransmitters dopamine, serotonin, noradrenaline, adrenaline and histamine, and quaternary ammonium compound such as choline. Also transports natural polyamines such as spermidine, agmatine and putrescine at low affinity, but relatively high turnover. Involved in the hepatic uptake of vitamin B1/thiamine, hence regulating hepatic lipid and energy metabolism. Contributes to the influx and efflux of fatty acid carriers carnitines and acylcarnitines across the basolateral membrane of hepatocytes, from the liver to the systemic circulation and inversely and may be involved in regulating the systemic availability of hepatic acylcarnitines. Mediates the bidirectional transport of acetylcholine (ACh) at the apical membrane of ciliated cell in airway epithelium, thereby playing a role in luminal release of ACh from bronchial epithelium. Transports dopaminergic neuromodulators cyclo(his-pro) and salsolinol with lower efficency. Also capable of transporting non-amine endogenous compounds such as prostaglandin E2 (PGE2) and prostaglandin F2-alpha (PGF2-alpha). May contribute to the transport of cationic compounds in testis across the blood-testis-barrier. Also mediates the uptake of xenobiotics tributylmethylammonium (TBuMA), quinidine, N-methyl-quinine (NMQ), N-methyl-quinidine (NMQD) N-(4,4-azo-n-pentyl)-quinuclidine (APQ), azidoprocainamide methoiodide (AMP), N-(4,4-azo-n-pentyl)-21-deoxyajmalinium (APDA) and 4-(4-(dimethylamino)styryl)-N-methylpyridinium (ASP). Functionally, functional isoform capable of transporting TEA. This Rattus norvegicus (Rat) protein is Solute carrier family 22 member 1.